A 332-amino-acid chain; its full sequence is 2-hydroxyacid dehydrogenase homolog 1 (332 aa).

NAD(+) contacts are provided by residues 154 to 155, 233 to 235, and D259; these read RI and TSR. R235 is an active-site residue. E264 is an active-site residue. Residue H296 is the Proton donor of the active site. Position 296–299 (296–299) interacts with NAD(+); sequence HQAF.

Belongs to the D-isomer specific 2-hydroxyacid dehydrogenase family.

The protein localises to the cytoplasm. Its subcellular location is the nucleus. The protein is 2-hydroxyacid dehydrogenase homolog 1 of Schizosaccharomyces pombe (strain 972 / ATCC 24843) (Fission yeast).